The primary structure comprises 160 residues: RNA-binding protein 3 (160 aa).

Positions 6–84 (GKLFVGGLNF…RQIRVDHAGK (79 aa)) constitute an RRM domain. Arg47 is modified (omega-N-methylarginine). Residues 81–116 (HAGKSARGSRGGAFGSYERGRGYPRGGGDQGYGSGR) form a disordered region. Gly residues predominate over residues 103 to 114 (YPRGGGDQGYGS). Arg105 carries the asymmetric dimethylarginine; alternate modification. Arg105 is modified (dimethylated arginine; alternate). Arg105 is subject to Omega-N-methylarginine; alternate. Omega-N-methylarginine is present on residues Arg120 and Arg134. A disordered region spans residues 135 to 160 (SRDYGGRSQGGYDRYSGGNYRDNYDN). Ser150 carries the phosphoserine modification. Residue Tyr158 is modified to Phosphotyrosine.

In terms of assembly, interacts with RPL4. Associates with the 60S ribosomal subunits.

The protein resides in the nucleus. It localises to the cytoplasm. Its subcellular location is the cell projection. It is found in the dendrite. Cold-inducible mRNA binding protein that enhances global protein synthesis at both physiological and mild hypothermic temperatures. Reduces the relative abundance of microRNAs, when overexpressed. Enhances phosphorylation of translation initiation factors and active polysome formation. In Capra hircus (Goat), this protein is RNA-binding protein 3.